The following is a 530-amino-acid chain: Alpha-(1,3)-fucosyltransferase 4 (530 aa).

2 disordered regions span residues 1 to 48 (MRRL…RAVP) and 66 to 113 (HLGG…TPAD). Over 1-147 (MRRLWGAARK…GGRRRWRRGR (147 aa)) the chain is Cytoplasmic. Basic and acidic residues predominate over residues 88–106 (ASGERQRRLEPQLQHESRC). The helical; Signal-anchor for type II membrane protein transmembrane segment at 148–172 (GLPWTVCVLAAAGLTCTALITYACW) threads the bilayer. Topologically, residues 173–530 (GQLPPLPWAS…IRNLASWFER (358 aa)) are lumenal. 2 N-linked (GlcNAc...) asparagine glycosylation sites follow: asparagine 216 and asparagine 315.

Belongs to the glycosyltransferase 10 family.

It is found in the golgi apparatus. It localises to the golgi stack membrane. The enzyme catalyses a beta-D-galactosyl-(1-&gt;4)-N-acetyl-beta-D-glucosaminyl derivative + GDP-beta-L-fucose = a beta-D-galactosyl-(1-&gt;4)-[alpha-L-fucosyl-(1-&gt;3)]-N-acetyl-beta-D-glucosaminyl derivative + GDP + H(+). It catalyses the reaction an N-acetyl-alpha-neuraminyl-(2-&gt;3)-beta-D-galactosyl-(1-&gt;4)-N-acetyl-beta-D-glucosaminyl derivative + GDP-beta-L-fucose = an alpha-Neu5Ac-(2-&gt;3)-beta-D-Gal-(1-&gt;4)-[alpha-L-Fuc-(1-&gt;3)]-beta-D-GlcNAc derivative + GDP + H(+). The catalysed reaction is an alpha-Neu5Ac-(2-&gt;3)-beta-D-Gal-(1-&gt;4)-beta-D-GlcNAc-(1-&gt;3)-beta-D-Gal-(1-&gt;4)-beta-D-GlcNAc derivative + GDP-beta-L-fucose = an alpha-Neu5Ac-(2-&gt;3)-beta-D-Gal-(1-&gt;4)-beta-D-GlcNAc-(1-&gt;3)-beta-D-Gal-(1-&gt;4)-[alpha-L-Fuc-(1-&gt;3)]-beta-D-GlcNAc derivative + GDP + H(+). It carries out the reaction an alpha-Neu5Ac-(2-&gt;3)-beta-D-Gal-(1-&gt;4)-beta-D-GlcNAc6S derivative + GDP-beta-L-fucose = an alpha-Neu5Ac-(2-&gt;3)-beta-D-Gal-(1-&gt;4)-[alpha-L-Fuc-(1-&gt;3)]-beta-D-GlcNAc6S derivative + GDP + H(+). It functions in the pathway protein modification; protein glycosylation. Its function is as follows. Catalyzes alpha(1-&gt;3) linkage of fucosyl moiety transferred from GDP-beta-L-fucose to N-acetyl glucosamine (GlcNAc) within type 2 lactosamine (LacNAc, Gal-beta(1-&gt;4)GlcNAc) glycan attached to N- or O-linked glycoproteins. Robustly fucosylates nonsialylated distal LacNAc unit of the polylactosamine chain to form Lewis X antigen (CD15), a glycan determinant known to mediate important cellular functions in development and immunity. Fucosylates with lower efficiency sialylated LacNAc acceptors to form sialyl Lewis X and 6-sulfo sialyl Lewis X determinants that serve as recognition epitopes for C-type lectins. Together with FUT7 contributes to SELE, SELL and SELP selectin ligand biosynthesis and selectin-dependent lymphocyte homing, leukocyte migration and blood leukocyte homeostasis. In a cell type specific manner, may also fucosylate the internal LacNAc unit of the polylactosamine chain to form VIM-2 antigen that serves as recognition epitope for SELE. The polypeptide is Alpha-(1,3)-fucosyltransferase 4 (FUT4) (Pan troglodytes (Chimpanzee)).